The following is a 167-amino-acid chain: Small ribosomal subunit protein uS5 (167 aa).

In terms of domain architecture, S5 DRBM spans 12–75 (LQEKLIAVNR…EKARRNMVTV (64 aa)).

This sequence belongs to the universal ribosomal protein uS5 family. In terms of assembly, part of the 30S ribosomal subunit. Contacts proteins S4 and S8.

Functionally, with S4 and S12 plays an important role in translational accuracy. Located at the back of the 30S subunit body where it stabilizes the conformation of the head with respect to the body. The chain is Small ribosomal subunit protein uS5 from Shewanella sp. (strain W3-18-1).